The sequence spans 465 residues: Alpha-2A adrenergic receptor (465 aa).

Over 1–48 the chain is Extracellular; sequence MFRQEQPLAEGSFAPMGSLQPEAGNASWNGTEAPGGGARATPYSLQVT. 2 N-linked (GlcNAc...) asparagine glycosylation sites follow: Asn25 and Asn29. A helical transmembrane segment spans residues 49-74; that stretch reads LTLVCLAGLLMLFTVFGNVLVIIAVF. Over 75–85 the chain is Cytoplasmic; it reads TSRALKAPQNL. A helical transmembrane segment spans residues 86-111; that stretch reads FLVSLASADILVATLVIPFSLANEVM. The Extracellular segment spans residues 112–121; sequence GYWYFGKAWC. Cys121 and Cys203 are oxidised to a cystine. A helical transmembrane segment spans residues 122-144; sequence EIYLALDVLFCTSSIVHLCAISL. Residues 145 to 164 lie on the Cytoplasmic side of the membrane; that stretch reads DRYWSITQAIEYNLKRTPRR. A helical membrane pass occupies residues 165-188; sequence IKAIIVTVWVISAVISFPPLISIE. Over 189 to 207 the chain is Extracellular; it reads KKAGGGGQQPAEPRCEIND. Residues 208-232 traverse the membrane as a helical segment; that stretch reads QKWYVISSCIGSFFAPCLIMILVYV. Residues 233–389 are Cytoplasmic-facing; sequence RIYQIAKRRT…RQNREKRFTF (157 aa). Residues 242–377 form a disordered region; it reads TRVPPSRRGP…RGGVAKASRW (136 aa). Residues 313-330 are compositionally biased toward basic and acidic residues; sequence SSEHAERPPGPRRSERGP. A Phosphoserine modification is found at Ser346. Arg368 bears the Omega-N-methylarginine mark. The helical transmembrane segment at 390–414 threads the bilayer; the sequence is VLAVVIGVFVVCWFPFFFTYTLTAV. The Extracellular segment spans residues 415-424; the sequence is GCSVPPTLFK. A helical membrane pass occupies residues 425-445; that stretch reads FFFWFGYCNSSLNPVIYTIFN. The Cytoplasmic portion of the chain corresponds to 446-465; sequence HDFRRAFKKILCRGDRKRIV. The S-palmitoyl cysteine moiety is linked to residue Cys457.

Belongs to the G-protein coupled receptor 1 family. Adrenergic receptor subfamily. ADRA2A sub-subfamily.

The protein localises to the cell membrane. Alpha-2 adrenergic receptors mediate the catecholamine-induced inhibition of adenylate cyclase through the action of G proteins. The sequence is that of Alpha-2A adrenergic receptor from Sus scrofa (Pig).